Here is a 404-residue protein sequence, read N- to C-terminus: Argininosuccinate synthase (404 aa).

Residues 11 to 19 and A38 contribute to the ATP site; that span reads AYSGGLDTS. Y91 and S96 together coordinate L-citrulline. Residue G121 coordinates ATP. Residues T123, N127, and D128 each contribute to the L-aspartate site. N127 lines the L-citrulline pocket. L-citrulline contacts are provided by R131, S181, S190, E266, and Y278.

Belongs to the argininosuccinate synthase family. Type 1 subfamily. In terms of assembly, homotetramer.

It localises to the cytoplasm. It carries out the reaction L-citrulline + L-aspartate + ATP = 2-(N(omega)-L-arginino)succinate + AMP + diphosphate + H(+). It participates in amino-acid biosynthesis; L-arginine biosynthesis; L-arginine from L-ornithine and carbamoyl phosphate: step 2/3. The polypeptide is Argininosuccinate synthase (Sulfurimonas denitrificans (strain ATCC 33889 / DSM 1251) (Thiomicrospira denitrificans (strain ATCC 33889 / DSM 1251))).